A 462-amino-acid chain; its full sequence is 7-hydroxymethyl chlorophyll a reductase, chloroplastic (462 aa).

A chloroplast-targeting transit peptide spans 1-20; sequence MITVVTSRLSLLPPVFSVVN.

It belongs to the FrhB family. As to quaternary structure, interacts with SGR1, the chlorophyll catabolic enzymes (CCEs) NYC1, NOL and RCCR, and the LHCII complex. Part of a SGR1-CCE-LHCII complex, which acts in chlorophyll breakdown. FAD serves as cofactor. Iron-sulfur cluster is required as a cofactor.

The protein resides in the plastid. It is found in the chloroplast. The enzyme catalyses chlorophyll a + 2 oxidized [2Fe-2S]-[ferredoxin] + H2O = 7(1)-hydroxychlorophyll a + 2 reduced [2Fe-2S]-[ferredoxin] + 2 H(+). Its function is as follows. Probable iron-sulfur flavoprotein that converts 7-hydroxymethyl chlorophyll a to chlorophyll a using ferredoxin as a reducing equivalent. Catalyzes the reduction of a hydroxymethyl group to a methyl group. Belongs to the chlorophyll catabolic enzymes (CCEs). In Arabidopsis thaliana (Mouse-ear cress), this protein is 7-hydroxymethyl chlorophyll a reductase, chloroplastic (HCAR).